Here is a 297-residue protein sequence, read N- to C-terminus: MAPSHAAHDSAATAHRIDGRAIARSLDERTAAAVRAIVARDGAPPGLAVVLVGNDPASEVYVGRKIEACRRVGILSFEHRLPAQTTQDALLTLIARLNADPTIHGILVQVPLPSHIDDGMVLSAIDPAKDVDGFHPVNVGRLSTGTGGLVPCTPLGVMMLLDSVIDDMKGMDAVVIGKSNIVGKPIAMLLLEREATVTVTHIETRGLPDIVRKADIIVAAAGAPRLVKGYWVKEGAVIIDVGITRLPGEGGKTRLVGDVAFDEVQHARAVTPVPGGVGPMTIACLLANTVKAAEMRG.

NADP(+) contacts are provided by residues 177 to 179 (GKS), Ile202, and Ile243.

Belongs to the tetrahydrofolate dehydrogenase/cyclohydrolase family. As to quaternary structure, homodimer.

It catalyses the reaction (6R)-5,10-methylene-5,6,7,8-tetrahydrofolate + NADP(+) = (6R)-5,10-methenyltetrahydrofolate + NADPH. The enzyme catalyses (6R)-5,10-methenyltetrahydrofolate + H2O = (6R)-10-formyltetrahydrofolate + H(+). Its pathway is one-carbon metabolism; tetrahydrofolate interconversion. Functionally, catalyzes the oxidation of 5,10-methylenetetrahydrofolate to 5,10-methenyltetrahydrofolate and then the hydrolysis of 5,10-methenyltetrahydrofolate to 10-formyltetrahydrofolate. In Rhizorhabdus wittichii (strain DSM 6014 / CCUG 31198 / JCM 15750 / NBRC 105917 / EY 4224 / RW1) (Sphingomonas wittichii), this protein is Bifunctional protein FolD 2.